We begin with the raw amino-acid sequence, 197 residues long: Probable thymidylate kinase (197 aa).

Residue 7 to 14 (GLDGSGKT) coordinates ATP.

The protein belongs to the thymidylate kinase family.

It carries out the reaction dTMP + ATP = dTDP + ADP. The polypeptide is Probable thymidylate kinase (Halorubrum lacusprofundi (strain ATCC 49239 / DSM 5036 / JCM 8891 / ACAM 34)).